Here is a 359-residue protein sequence, read N- to C-terminus: Peroxisome assembly protein 12 (359 aa).

Residues 1-19 (MAEYGAHITTASVADDQPS) are Peroxisomal matrix-facing. A helical transmembrane segment spans residues 20 to 47 (IFEVVAQDSLMTAVRPALQHVVKVLAES). Topologically, residues 48–51 (NPAH) are cytoplasmic. Residues 52 to 76 (YGFLWRWFDEIFTLLDFLLQQHYLS) traverse the membrane as a helical segment. Residues 77-109 (RTSASFSEHFYGLKRIVAGSSPHLQRPASAGLP) are Peroxisomal matrix-facing. A helical membrane pass occupies residues 110–139 (KEHLWKSAMFLVLLPYLKVKLEKLASSLRE). The Cytoplasmic segment spans residues 140–144 (EDEYS). The chain crosses the membrane as a helical span at residues 145 to 183 (IHPPSSRWKRFYRAFLAAYPFVNMAWEGWFLTQQLRYIL). At 184 to 249 (GKAEHHSPLL…VGGVALSLST (66 aa)) the chain is on the peroxisomal matrix side. A helical transmembrane segment spans residues 250-277 (GLSVGVFFLQFLDWWYSSENQEAIKSLT). Over 278–359 (ALPTPPPPVH…HLIKLYSPEN (82 aa)) the chain is Cytoplasmic. Positions 304, 307, 325, and 328 each coordinate Zn(2+). The RING-type; degenerate zinc finger occupies 304–343 (CPLCRKTRVNDTVLATSGYVFCYRCVFNYVRSHQACPITG).

It belongs to the pex2/pex10/pex12 family. As to quaternary structure, component of the PEX2-PEX10-PEX12 retrotranslocation channel, composed of PEX2, PEX10 and PEX12. Interacts with PEX19 via its cytoplasmic domain.

The protein localises to the peroxisome membrane. It functions in the pathway protein modification; protein ubiquitination. Component of a retrotranslocation channel required for peroxisome organization by mediating export of the PEX5 receptor from peroxisomes to the cytosol, thereby promoting PEX5 recycling. The retrotranslocation channel is composed of PEX2, PEX10 and PEX12; each subunit contributing transmembrane segments that coassemble into an open channel that specifically allows the passage of PEX5 through the peroxisomal membrane. PEX12 also regulates PEX5 recycling by activating the E3 ubiquitin-protein ligase activity of PEX10. When PEX5 recycling is compromised, PEX12 stimulates PEX10-mediated polyubiquitination of PEX5, leading to its subsequent degradation. The protein is Peroxisome assembly protein 12 (Pex12) of Mus musculus (Mouse).